The following is a 419-amino-acid chain: Phospho-N-acetylmuramoyl-pentapeptide-transferase (419 aa).

10 helical membrane passes run 22–42, 72–92, 99–119, 135–155, 208–228, 238–258, 278–298, 303–323, 328–348, and 396–416; these read YVSF…TVIG, TPTM…LLLA, ILLM…DDYI, IIGQ…NPAV, VLFG…FISN, GLAT…AYVS, LTIF…YNAY, FMGD…ALII, LLPI…IQVF, and KITV…IATL.

The protein belongs to the glycosyltransferase 4 family. MraY subfamily. Mg(2+) is required as a cofactor.

The protein localises to the cell inner membrane. The catalysed reaction is UDP-N-acetyl-alpha-D-muramoyl-L-alanyl-gamma-D-glutamyl-meso-2,6-diaminopimeloyl-D-alanyl-D-alanine + di-trans,octa-cis-undecaprenyl phosphate = di-trans,octa-cis-undecaprenyl diphospho-N-acetyl-alpha-D-muramoyl-L-alanyl-D-glutamyl-meso-2,6-diaminopimeloyl-D-alanyl-D-alanine + UMP. Its pathway is cell wall biogenesis; peptidoglycan biosynthesis. In terms of biological role, catalyzes the initial step of the lipid cycle reactions in the biosynthesis of the cell wall peptidoglycan: transfers peptidoglycan precursor phospho-MurNAc-pentapeptide from UDP-MurNAc-pentapeptide onto the lipid carrier undecaprenyl phosphate, yielding undecaprenyl-pyrophosphoryl-MurNAc-pentapeptide, known as lipid I. This Porphyromonas gingivalis (strain ATCC BAA-308 / W83) protein is Phospho-N-acetylmuramoyl-pentapeptide-transferase.